The primary structure comprises 116 residues: Large ribosomal subunit protein bL17 (116 aa).

It belongs to the bacterial ribosomal protein bL17 family. In terms of assembly, part of the 50S ribosomal subunit. Contacts protein L32.

In Synechococcus sp. (strain WH7803), this protein is Large ribosomal subunit protein bL17.